Here is a 476-residue protein sequence, read N- to C-terminus: Protein transport protein Sec61 subunit alpha isoform 1 (476 aa).

At 2-28 (AIKFLEVIKPFCVILPEIQKPERKIQF) the chain is on the cytoplasmic side. Residues 29 to 46 (KEKVLWTAITLFIFLVCC) form a helical membrane-spanning segment. Residues 47–80 (QIPLFGIMSSDSADPFYWMRVILASNRGTLMELG) lie on the Lumenal side of the membrane. Residues 81 to 97 (ISPIVTSGLIMQLLAGA) form a helical membrane-spanning segment. Over 98–109 (KIIEVGDTPKDR) the chain is Cytoplasmic. Residues 110-131 (ALFNGAQKLFGMIITIGQSIVY) traverse the membrane as a helical segment. Residues 132–148 (VMTGMYGDPSEMGAGIC) are Lumenal-facing. The chain crosses the membrane as a helical span at residues 149–167 (LLITIQLFVAGLIVLLLDE). Residues 168–177 (LLQKGYGLGS) are Cytoplasmic-facing. The helical transmembrane segment at 178–196 (GISLFIATNICETIVWKAF) threads the bilayer. Residues 197–241 (SPTTVNTGRGMEFEGAIIALFHLLATRTDKVRALREAFYRQNLPN) lie on the Lumenal side of the membrane. Residues 242–259 (LMNLIATIFVFAVVIYFQ) traverse the membrane as a helical segment. At 260–285 (GFRVDLPIKSARYRGQYNTYPIKLFY) the chain is on the cytoplasmic side. Residues 286 to 306 (TSNIPIILQSALVSNLYVISQ) traverse the membrane as a helical segment. Residues 307-356 (MLSARFSGNLLVSLLGTWSDTSSGGPARAYPVGGLCHYLSPPESFGSVLE) lie on the Lumenal side of the membrane. The chain crosses the membrane as a helical span at residues 357-379 (DPVHAVVYIVFMLGSCAFFSKTW). Residues 380–420 (IEVSGSSAKDVAKQLKEQQMVMRGHRETSMVHELNRYIPTA) are Cytoplasmic-facing. The helical transmembrane segment at 421–437 (AAFGGLCIGALSVLADF) threads the bilayer. The Lumenal portion of the chain corresponds to 438–443 (LGAIGS). Residues 444-458 (GTGILLAVTIIYQYF) form a helical membrane-spanning segment. At 459–476 (EIFVKEQSEVGSMGALLF) the chain is on the cytoplasmic side.

The protein belongs to the SecY/SEC61-alpha family. As to quaternary structure, the SEC61 channel-forming translocon complex consists of channel-forming core components SEC61A1, SEC61B and SEC61G and different auxiliary components such as SEC62 and SEC63. The SEC61 channel associates with the multi-pass translocon (MPT) complex.

The protein localises to the endoplasmic reticulum membrane. Its function is as follows. Component of SEC61 channel-forming translocon complex that mediates transport of signal peptide-containing precursor polypeptides across the endoplasmic reticulum (ER). Forms a ribosome receptor and a gated pore in the ER membrane, both functions required for cotranslational translocation of nascent polypeptides. May cooperate with auxiliary protein SEC62, SEC63 and HSPA5/BiP to enable post-translational transport of small presecretory proteins. The SEC61 channel is also involved in ER membrane insertion of transmembrane proteins: it mediates membrane insertion of the first few transmembrane segments of proteins, while insertion of subsequent transmembrane regions of multi-pass membrane proteins is mediated by the multi-pass translocon (MPT) complex. The SEC61 channel cooperates with the translocating protein TRAM1 to import nascent proteins into the ER. Controls the passive efflux of calcium ions from the ER lumen to the cytosol through SEC61 channel, contributing to the maintenance of cellular calcium homeostasis. Plays a critical role in nephrogenesis, specifically at pronephros stage. This is Protein transport protein Sec61 subunit alpha isoform 1 (SEC61A1) from Canis lupus familiaris (Dog).